Reading from the N-terminus, the 473-residue chain is Photosystem II CP43 reaction center protein (473 aa).

The propeptide occupies 1–14; the sequence is MKILYSPRRFYPVE. The residue at position 15 (threonine 15) is an N-acetylthreonine. A Phosphothreonine modification is found at threonine 15. The next 5 helical transmembrane spans lie at 69 to 93, 134 to 155, 178 to 200, 255 to 275, and 291 to 312; these read LFEV…PHLA, IIGP…KDKN, KALY…RKIT, KPFA…LSYS, and WFNN…ASQA. Glutamate 367 serves as a coordination point for [CaMn4O5] cluster. The chain crosses the membrane as a helical span at residues 447-471; sequence RARAAAAGFEKGIDRDFEPVLSTTP.

Belongs to the PsbB/PsbC family. PsbC subfamily. As to quaternary structure, PSII is composed of 1 copy each of membrane proteins PsbA, PsbB, PsbC, PsbD, PsbE, PsbF, PsbH, PsbI, PsbJ, PsbK, PsbL, PsbM, PsbT, PsbX, PsbY, PsbZ, Psb30/Ycf12, at least 3 peripheral proteins of the oxygen-evolving complex and a large number of cofactors. It forms dimeric complexes. The cofactor is Binds multiple chlorophylls and provides some of the ligands for the Ca-4Mn-5O cluster of the oxygen-evolving complex. It may also provide a ligand for a Cl- that is required for oxygen evolution. PSII binds additional chlorophylls, carotenoids and specific lipids..

It is found in the plastid. The protein resides in the chloroplast thylakoid membrane. In terms of biological role, one of the components of the core complex of photosystem II (PSII). It binds chlorophyll and helps catalyze the primary light-induced photochemical processes of PSII. PSII is a light-driven water:plastoquinone oxidoreductase, using light energy to abstract electrons from H(2)O, generating O(2) and a proton gradient subsequently used for ATP formation. This chain is Photosystem II CP43 reaction center protein, found in Huperzia lucidula (Shining clubmoss).